A 262-amino-acid chain; its full sequence is Ribosomal RNA small subunit methyltransferase A (262 aa).

Histidine 16, leucine 18, glycine 43, glutamate 64, aspartate 89, and asparagine 109 together coordinate S-adenosyl-L-methionine.

This sequence belongs to the class I-like SAM-binding methyltransferase superfamily. rRNA adenine N(6)-methyltransferase family. RsmA subfamily.

The protein resides in the cytoplasm. The catalysed reaction is adenosine(1518)/adenosine(1519) in 16S rRNA + 4 S-adenosyl-L-methionine = N(6)-dimethyladenosine(1518)/N(6)-dimethyladenosine(1519) in 16S rRNA + 4 S-adenosyl-L-homocysteine + 4 H(+). Functionally, specifically dimethylates two adjacent adenosines (A1518 and A1519) in the loop of a conserved hairpin near the 3'-end of 16S rRNA in the 30S particle. May play a critical role in biogenesis of 30S subunits. The sequence is that of Ribosomal RNA small subunit methyltransferase A from Xanthomonas euvesicatoria pv. vesicatoria (strain 85-10) (Xanthomonas campestris pv. vesicatoria).